A 309-amino-acid chain; its full sequence is Ribonuclease Z (309 aa).

Residues histidine 63, histidine 65, aspartate 67, histidine 68, histidine 145, aspartate 216, and histidine 274 each coordinate Zn(2+). Aspartate 67 functions as the Proton acceptor in the catalytic mechanism.

Belongs to the RNase Z family. In terms of assembly, homodimer. The cofactor is Zn(2+).

It catalyses the reaction Endonucleolytic cleavage of RNA, removing extra 3' nucleotides from tRNA precursor, generating 3' termini of tRNAs. A 3'-hydroxy group is left at the tRNA terminus and a 5'-phosphoryl group is left at the trailer molecule.. Its function is as follows. Zinc phosphodiesterase, which displays some tRNA 3'-processing endonuclease activity. Probably involved in tRNA maturation, by removing a 3'-trailer from precursor tRNA. In Streptococcus pneumoniae serotype 2 (strain D39 / NCTC 7466), this protein is Ribonuclease Z.